The following is a 247-amino-acid chain: Adiponectin (247 aa).

A signal peptide spans 1–17 (MLLLQALLFLLILPSHA). Residues T23 and T24 are each glycosylated (O-linked (GalNAc...) threonine). K36 is modified (5-hydroxylysine). The residue at position 39 (C39) is an S-(2-succinyl)cysteine. The tract at residues 44–105 (AGIPGHPGHN…GFPGTPGRKG (62 aa)) is disordered. One can recognise a Collagen-like domain in the interval 45–110 (GIPGHPGHNG…PGRKGEPGEA (66 aa)). P47, P50, and P56 each carry 4-hydroxyproline. A compositionally biased stretch (basic and acidic residues) spans 58 to 73 (RDGRDGTPGEKGEKGD). A 5-hydroxylysine; alternate mark is found at K68, K71, and K80. Residues K68, K71, and K80 are each glycosylated (O-linked (Gal...) hydroxylysine; alternate). 4-hydroxyproline is present on P94. The residue at position 104 (K104) is a 5-hydroxylysine; alternate. The O-linked (Gal...) hydroxylysine; alternate glycan is linked to K104. Positions 111–247 (AYVYRSAFSV…TGFLLYHDTN (137 aa)) constitute a C1q domain.

As to quaternary structure, homomultimer. Forms trimers, hexamers and 12- to 18-mers. The trimers (low molecular weight complexes / LMW) are assembled via non-covalent interactions of the collagen-like domains in a triple helix and hydrophobic interactions within the globular C1q domain. Several trimers can associate to form disulfide-linked hexamers (middle molecular weight complexes / MMW) and larger complexes (higher molecular weight / HMW). The HMW-complex assembly is also modulated by the degree of lysine hydroxylation and glycosylation. LMW, MMW and HMW complexes bind to HBEGF, MMW and HMW complexes bind to PDGFB, and HMW complex binds to FGF2. Interacts with CTRP9 via the C1q domain (heterotrimeric complex). In terms of processing, HMW complexes are more extensively glycosylated than smaller oligomers. Hydroxylation and glycosylation of the lysine residues within the collagen-like domain of adiponectin seem to be critically involved in regulating the formation and/or secretion of HMW complexes and consequently contribute to the insulin-sensitizing activity of adiponectin in hepatocytes. O-glycosylated. Not N-glycosylated O-linked glycans on hydroxylysine residues consist of Glc-Gal disaccharides bound to the oxygen atom of post-translationally added hydroxyl groups. O-linked glycosylation in the N-terminal is disialylated with the structure Neu5Acalpha2-&gt;8Neu5Acalpha2-&gt;3Gal. Sialylated by alpha 2,8-sialyltransferase III. Post-translationally, succination of Cys-39 by the Krebs cycle intermediate fumarate, which leads to S-(2-succinyl)cysteine residues, inhibits polymerization and secretion of adiponectin. Adiponectin is a major target for succination in both adipocytes and adipose tissue of diabetic mice. It was proposed that succination of proteins is a biomarker of mitochondrial stress and accumulation of Krebs cycle intermediates in adipose tissue in diabetes and that succination of adiponectin may contribute to the decrease in plasma adiponectin in diabetes. In terms of tissue distribution, synthesized exclusively by adipocytes and secreted into plasma.

It localises to the secreted. Its activity is regulated as follows. Polymerization and secretion of adiponectin is inhibited by succination of cysteine residues by the Krebs cycle intermediate fumarate, which leads to S-(2-succinyl)cysteine residues. Functionally, important adipokine involved in the control of fat metabolism and insulin sensitivity, with direct anti-diabetic, anti-atherogenic and anti-inflammatory activities. Stimulates AMPK phosphorylation and activation in the liver and the skeletal muscle, enhancing glucose utilization and fatty-acid combustion. Antagonizes TNF-alpha by negatively regulating its expression in various tissues such as liver and macrophages, and also by counteracting its effects. Inhibits endothelial NF-kappa-B signaling through a cAMP-dependent pathway. May play a role in cell growth, angiogenesis and tissue remodeling by binding and sequestering various growth factors with distinct binding affinities, depending on the type of complex, LMW, MMW or HMW. The polypeptide is Adiponectin (Adipoq) (Mus musculus (Mouse)).